The chain runs to 359 residues: DNA replication and repair protein RecF (359 aa).

30–37 (GNNGSGKT) is an ATP binding site.

Belongs to the RecF family.

It is found in the cytoplasm. The RecF protein is involved in DNA metabolism; it is required for DNA replication and normal SOS inducibility. RecF binds preferentially to single-stranded, linear DNA. It also seems to bind ATP. The polypeptide is DNA replication and repair protein RecF (Haemophilus influenzae (strain 86-028NP)).